A 571-amino-acid chain; its full sequence is 2-succinyl-5-enolpyruvyl-6-hydroxy-3-cyclohexene-1-carboxylate synthase (571 aa).

The protein belongs to the TPP enzyme family. MenD subfamily. In terms of assembly, homodimer. The cofactor is Mg(2+). Mn(2+) is required as a cofactor. It depends on thiamine diphosphate as a cofactor.

The enzyme catalyses isochorismate + 2-oxoglutarate + H(+) = 5-enolpyruvoyl-6-hydroxy-2-succinyl-cyclohex-3-ene-1-carboxylate + CO2. It participates in quinol/quinone metabolism; 1,4-dihydroxy-2-naphthoate biosynthesis; 1,4-dihydroxy-2-naphthoate from chorismate: step 2/7. Its pathway is quinol/quinone metabolism; menaquinone biosynthesis. In terms of biological role, catalyzes the thiamine diphosphate-dependent decarboxylation of 2-oxoglutarate and the subsequent addition of the resulting succinic semialdehyde-thiamine pyrophosphate anion to isochorismate to yield 2-succinyl-5-enolpyruvyl-6-hydroxy-3-cyclohexene-1-carboxylate (SEPHCHC). This chain is 2-succinyl-5-enolpyruvyl-6-hydroxy-3-cyclohexene-1-carboxylate synthase, found in Vibrio parahaemolyticus serotype O3:K6 (strain RIMD 2210633).